A 343-amino-acid chain; its full sequence is Phenylalanine--tRNA ligase alpha subunit (343 aa).

E258 is a binding site for Mg(2+).

Belongs to the class-II aminoacyl-tRNA synthetase family. Phe-tRNA synthetase alpha subunit type 1 subfamily. In terms of assembly, tetramer of two alpha and two beta subunits. Requires Mg(2+) as cofactor.

It localises to the cytoplasm. It catalyses the reaction tRNA(Phe) + L-phenylalanine + ATP = L-phenylalanyl-tRNA(Phe) + AMP + diphosphate + H(+). The protein is Phenylalanine--tRNA ligase alpha subunit of Symbiobacterium thermophilum (strain DSM 24528 / JCM 14929 / IAM 14863 / T).